The following is a 390-amino-acid chain: tRNA(Met) cytidine acetate ligase (390 aa).

ATP is bound by residues 7 to 20 (VVEYNPFHNGHKLH), Gly101, Asn162, and Arg187.

It belongs to the TmcAL family.

The protein localises to the cytoplasm. It carries out the reaction cytidine(34) in elongator tRNA(Met) + acetate + ATP = N(4)-acetylcytidine(34) in elongator tRNA(Met) + AMP + diphosphate. Its function is as follows. Catalyzes the formation of N(4)-acetylcytidine (ac(4)C) at the wobble position of elongator tRNA(Met), using acetate and ATP as substrates. First activates an acetate ion to form acetyladenylate (Ac-AMP) and then transfers the acetyl group to tRNA to form ac(4)C34. This Listeria monocytogenes serotype 4b (strain CLIP80459) protein is tRNA(Met) cytidine acetate ligase.